Here is a 475-residue protein sequence, read N- to C-terminus: Adenosylhomocysteinase (475 aa).

Substrate is bound by residues threonine 60, aspartate 133, and glutamate 198. 199 to 201 (TTT) lines the NAD(+) pocket. Substrate contacts are provided by lysine 228 and aspartate 232. NAD(+) contacts are provided by residues asparagine 233, 262–267 (GYGDVG), glutamate 285, asparagine 320, 341–343 (IGH), and asparagine 389.

The protein belongs to the adenosylhomocysteinase family. Requires NAD(+) as cofactor.

It is found in the cytoplasm. It carries out the reaction S-adenosyl-L-homocysteine + H2O = L-homocysteine + adenosine. The protein operates within amino-acid biosynthesis; L-homocysteine biosynthesis; L-homocysteine from S-adenosyl-L-homocysteine: step 1/1. May play a key role in the regulation of the intracellular concentration of adenosylhomocysteine. The sequence is that of Adenosylhomocysteinase from Syntrophotalea carbinolica (strain DSM 2380 / NBRC 103641 / GraBd1) (Pelobacter carbinolicus).